Consider the following 268-residue polypeptide: Interleukin-1 alpha (268 aa).

Positions 1–112 (MAKVPDLFED…NTEEEIIKPR (112 aa)) are excised as a propeptide. Lys-82 carries the post-translational modification N6-acetyllysine. The tract at residues 82–86 (KKRRL) is nuclear localization signal (NLS). Ser-87 carries the phosphoserine modification. 2 N-linked (GlcNAc...) asparagine glycosylation sites follow: Asn-102 and Asn-141.

Belongs to the IL-1 family. In terms of assembly, monomer. Interacts with TMED10; the interaction mediates the translocation from the cytoplasm into the ERGIC (endoplasmic reticulum-Golgi intermediate compartment) and thereby secretion. Interacts with IL1R1. Interacts with S100A13; this interaction is the first step in the export of IL1A, followed by direct translocation of this complex across the plasma membrane. Post-translationally, acetylated within its nuclear localization sequence, which impacts subcellular localization. In terms of processing, proteolytic processed by CAPN1 in a calcium-dependent manner. Cleavage from 31 kDa precursor to 18 kDa biologically active molecules. Phosphorylated. Phosphorylation greatly enhances susceptibility to digestion and promotes the conversion of pre-IL1A alpha to the biologically active IL1A.

It localises to the nucleus. The protein localises to the cytoplasm. The protein resides in the secreted. Functionally, cytokine constitutively present intracellularly in nearly all resting non-hematopoietic cells that plays an important role in inflammation and bridges the innate and adaptive immune systems. After binding to its receptor IL1R1 together with its accessory protein IL1RAP, forms the high affinity interleukin-1 receptor complex. Signaling involves the recruitment of adapter molecules such as MYD88, IRAK1 or IRAK4. In turn, mediates the activation of NF-kappa-B and the three MAPK pathways p38, p42/p44 and JNK pathways. Within the cell, acts as an alarmin and cell death results in its liberation in the extracellular space after disruption of the cell membrane to induce inflammation and alert the host to injury or damage. In addition to its role as a danger signal, which occurs when the cytokine is passively released by cell necrosis, directly senses DNA damage and acts as signal for genotoxic stress without loss of cell integrity. The sequence is that of Interleukin-1 alpha (IL1A) from Bubalus carabanensis (Swamp type water buffalo).